A 394-amino-acid chain; its full sequence is Elongation factor Tu (394 aa).

Positions 10–204 constitute a tr-type G domain; it reads KPHVNVGTIG…HLDNYIPEPE (195 aa). Positions 19–26 are G1; that stretch reads GHVDHGKT. 19–26 contributes to the GTP binding site; it reads GHVDHGKT. Residue threonine 26 coordinates Mg(2+). The tract at residues 60–64 is G2; it reads GITIN. The tract at residues 81-84 is G3; sequence DCPG. Residues 81-85 and 136-139 each bind GTP; these read DCPGH and NKCD. The tract at residues 136 to 139 is G4; the sequence is NKCD. Residues 174-176 form a G5 region; the sequence is SAL.

It belongs to the TRAFAC class translation factor GTPase superfamily. Classic translation factor GTPase family. EF-Tu/EF-1A subfamily. As to quaternary structure, monomer.

It localises to the cytoplasm. It carries out the reaction GTP + H2O = GDP + phosphate + H(+). Its function is as follows. GTP hydrolase that promotes the GTP-dependent binding of aminoacyl-tRNA to the A-site of ribosomes during protein biosynthesis. The sequence is that of Elongation factor Tu from Histophilus somni (strain 129Pt) (Haemophilus somnus).